A 156-amino-acid chain; its full sequence is Zinc finger SWIM domain-containing protein 7 homolog (156 aa).

The segment at 82-120 (YMCLIQGDYCSCPSFNFSVLLKSDSVYCKHQISSILAEI) adopts an SWIM-type zinc-finger fold.

Belongs to the SWS1 family.

The protein localises to the nucleus. Its function is as follows. May be involved in the homologous recombination repair (HRR) pathway of double-stranded DNA breaks arising during DNA replication or induced by DNA-damaging agents. The chain is Zinc finger SWIM domain-containing protein 7 homolog (zswim7) from Dictyostelium discoideum (Social amoeba).